The chain runs to 68 residues: Peptide TsPep3 (68 aa).

The N-terminal stretch at Met1–Ala26 is a signal peptide. 4 disulfide bridges follow: Cys30–Cys38, Cys33–Cys54, Cys37–Cys47, and Cys42–Cys52. A propeptide spanning residues Gly56–Gln68 is cleaved from the precursor.

In terms of tissue distribution, expressed by the venom gland.

It is found in the secreted. Probable weak potassium channel blocker. The protein is Peptide TsPep3 of Tityus serrulatus (Brazilian scorpion).